The sequence spans 952 residues: 2-oxoglutarate dehydrogenase E1 component (952 aa).

The protein belongs to the alpha-ketoglutarate dehydrogenase family. In terms of assembly, homodimer. Part of the 2-oxoglutarate dehydrogenase (OGDH) complex composed of E1 (2-oxoglutarate dehydrogenase), E2 (dihydrolipoamide succinyltransferase) and E3 (dihydrolipoamide dehydrogenase); the complex contains multiple copies of the three enzymatic components (E1, E2 and E3). It depends on thiamine diphosphate as a cofactor.

It catalyses the reaction N(6)-[(R)-lipoyl]-L-lysyl-[protein] + 2-oxoglutarate + H(+) = N(6)-[(R)-S(8)-succinyldihydrolipoyl]-L-lysyl-[protein] + CO2. Functionally, E1 component of the 2-oxoglutarate dehydrogenase (OGDH) complex which catalyzes the decarboxylation of 2-oxoglutarate, the first step in the conversion of 2-oxoglutarate to succinyl-CoA and CO(2). This chain is 2-oxoglutarate dehydrogenase E1 component, found in Geobacillus sp. (strain WCH70).